Consider the following 309-residue polypeptide: Ribose-phosphate pyrophosphokinase (309 aa).

Residues 37–39 (DGE) and 96–97 (RQ) contribute to the ATP site. Histidine 130 and aspartate 169 together coordinate Mg(2+). The active site involves lysine 192. Residues arginine 194, aspartate 218, and 222-226 (DTAGT) contribute to the D-ribose 5-phosphate site.

This sequence belongs to the ribose-phosphate pyrophosphokinase family. Class I subfamily. Homohexamer. It depends on Mg(2+) as a cofactor.

It is found in the cytoplasm. The catalysed reaction is D-ribose 5-phosphate + ATP = 5-phospho-alpha-D-ribose 1-diphosphate + AMP + H(+). It participates in metabolic intermediate biosynthesis; 5-phospho-alpha-D-ribose 1-diphosphate biosynthesis; 5-phospho-alpha-D-ribose 1-diphosphate from D-ribose 5-phosphate (route I): step 1/1. Involved in the biosynthesis of the central metabolite phospho-alpha-D-ribosyl-1-pyrophosphate (PRPP) via the transfer of pyrophosphoryl group from ATP to 1-hydroxyl of ribose-5-phosphate (Rib-5-P). This is Ribose-phosphate pyrophosphokinase from Wolinella succinogenes (strain ATCC 29543 / DSM 1740 / CCUG 13145 / JCM 31913 / LMG 7466 / NCTC 11488 / FDC 602W) (Vibrio succinogenes).